The primary structure comprises 337 residues: Glyceraldehyde-3-phosphate dehydrogenase (337 aa).

NAD(+) is bound by residues 12–13 (RI), Asp-34, and Arg-79. D-glyceraldehyde 3-phosphate-binding positions include 150–152 (SCT), Thr-181, 210–211 (TG), and Arg-233. Catalysis depends on Cys-151, which acts as the Nucleophile. Asn-315 lines the NAD(+) pocket.

The protein belongs to the glyceraldehyde-3-phosphate dehydrogenase family. Homotetramer.

The protein localises to the cytoplasm. It catalyses the reaction D-glyceraldehyde 3-phosphate + phosphate + NAD(+) = (2R)-3-phospho-glyceroyl phosphate + NADH + H(+). It functions in the pathway carbohydrate degradation; glycolysis; pyruvate from D-glyceraldehyde 3-phosphate: step 1/5. This Coccidioides immitis (strain RS) (Valley fever fungus) protein is Glyceraldehyde-3-phosphate dehydrogenase (GPD).